We begin with the raw amino-acid sequence, 279 residues long: NAD kinase (279 aa).

The Proton acceptor role is filled by Asp-61. NAD(+)-binding positions include Asp-61–Gly-62, Asn-138–Asp-139, Lys-149, Lys-166, Asp-168, and Thr-179–Ser-184.

This sequence belongs to the NAD kinase family. It depends on a divalent metal cation as a cofactor.

The protein localises to the cytoplasm. It catalyses the reaction NAD(+) + ATP = ADP + NADP(+) + H(+). Involved in the regulation of the intracellular balance of NAD and NADP, and is a key enzyme in the biosynthesis of NADP. Catalyzes specifically the phosphorylation on 2'-hydroxyl of the adenosine moiety of NAD to yield NADP. In Borrelia garinii subsp. bavariensis (strain ATCC BAA-2496 / DSM 23469 / PBi) (Borreliella bavariensis), this protein is NAD kinase.